Here is a 288-residue protein sequence, read N- to C-terminus: Translocon-associated protein subunit alpha (288 aa).

The first 28 residues, 1 to 28 (MFNFGSKILVLFLVAFPCGLISFGRVSA), serve as a signal peptide directing secretion. Over 29–208 (DSESAEDIFP…ELEEGLDGET (180 aa)) the chain is Lumenal. Positions 34–69 (EDIFPDSTVDEEEEEEEDEVLVEEDQVPGSETEDDI) are disordered. Residues N137 and N192 are each glycosylated (N-linked (GlcNAc...) asparagine). The helical transmembrane segment at 209-229 (IFMYIFLTGLVVLAVFGMYQV) threads the bilayer. Residues 230-288 (LESRTRKRFPVKVETGTGGMNGVDISWIPQETLNIMSKASASPKASPRKRTKRAVGVDQ) lie on the Cytoplasmic side of the membrane. The tract at residues 267-288 (KASASPKASPRKRTKRAVGVDQ) is disordered.

Belongs to the TRAP-alpha family. As to quaternary structure, heterotetramer of TRAP-alpha, TRAP-beta, TRAP-delta and TRAP-gamma. Phosphorylated in its cytoplasmic tail.

The protein localises to the endoplasmic reticulum membrane. TRAP proteins are part of a complex whose function is to bind calcium to the ER membrane and thereby regulate the retention of ER resident proteins. May be involved in the recycling of the translocation apparatus after completion of the translocation process or may function as a membrane-bound chaperone facilitating folding of translocated proteins. This is Translocon-associated protein subunit alpha (ssr1) from Oncorhynchus mykiss (Rainbow trout).